The sequence spans 299 residues: Centriolar and ciliogenesis-associated protein HYLS1 (299 aa).

At Ser179 the chain carries Phosphoserine.

The protein belongs to the HYLS1 family.

It localises to the cytoplasm. It is found in the cell projection. The protein localises to the cilium. The protein resides in the cytoskeleton. Its subcellular location is the microtubule organizing center. It localises to the centrosome. It is found in the centriole. Functionally, plays a role in ciliogenesis. The polypeptide is Centriolar and ciliogenesis-associated protein HYLS1 (Homo sapiens (Human)).